A 202-amino-acid polypeptide reads, in one-letter code: Proteasome subunit beta 1 (202 aa).

A propeptide (removed in mature form; by autocatalysis) is located at residue M1. Catalysis depends on T2, which acts as the Nucleophile.

The protein belongs to the peptidase T1B family. The 20S proteasome core is composed of 14 alpha and 14 beta subunits that assemble into four stacked heptameric rings, resulting in a barrel-shaped structure. The two inner rings, each composed of seven catalytic beta subunits, are sandwiched by two outer rings, each composed of seven alpha subunits. The catalytic chamber with the active sites is on the inside of the barrel. Has a gated structure, the ends of the cylinder being occluded by the N-termini of the alpha-subunits. Is capped at one or both ends by the proteasome regulatory ATPase, PAN.

The protein resides in the cytoplasm. The catalysed reaction is Cleavage of peptide bonds with very broad specificity.. Its activity is regulated as follows. The formation of the proteasomal ATPase PAN-20S proteasome complex, via the docking of the C-termini of PAN into the intersubunit pockets in the alpha-rings, triggers opening of the gate for substrate entry. Interconversion between the open-gate and close-gate conformations leads to a dynamic regulation of the 20S proteasome proteolysis activity. Component of the proteasome core, a large protease complex with broad specificity involved in protein degradation. This is Proteasome subunit beta 1 from Pyrobaculum aerophilum (strain ATCC 51768 / DSM 7523 / JCM 9630 / CIP 104966 / NBRC 100827 / IM2).